The sequence spans 490 residues: Cytochrome P450 2C1 (490 aa).

Position 435 (cysteine 435) interacts with heme.

It belongs to the cytochrome P450 family. Heme serves as cofactor.

It is found in the endoplasmic reticulum membrane. Its subcellular location is the microsome membrane. It catalyses the reaction an organic molecule + reduced [NADPH--hemoprotein reductase] + O2 = an alcohol + oxidized [NADPH--hemoprotein reductase] + H2O + H(+). Functionally, cytochromes P450 are a group of heme-thiolate monooxygenases. In liver microsomes, this enzyme is involved in an NADPH-dependent electron transport pathway. It oxidizes a variety of structurally unrelated compounds, including steroids, fatty acids, and xenobiotics. This is Cytochrome P450 2C1 (CYP2C1) from Oryctolagus cuniculus (Rabbit).